A 158-amino-acid polypeptide reads, in one-letter code: 6,7-dimethyl-8-ribityllumazine synthase (158 aa).

Residues Phe22, 57-59, and 81-83 contribute to the 5-amino-6-(D-ribitylamino)uracil site; these read AVE and AVI. 86-87 is a binding site for (2S)-2-hydroxy-3-oxobutyl phosphate; it reads GT. His89 acts as the Proton donor in catalysis. Phe114 is a binding site for 5-amino-6-(D-ribitylamino)uracil. A (2S)-2-hydroxy-3-oxobutyl phosphate-binding site is contributed by Arg128.

Belongs to the DMRL synthase family. Forms an icosahedral capsid composed of 60 subunits, arranged as a dodecamer of pentamers.

It carries out the reaction (2S)-2-hydroxy-3-oxobutyl phosphate + 5-amino-6-(D-ribitylamino)uracil = 6,7-dimethyl-8-(1-D-ribityl)lumazine + phosphate + 2 H2O + H(+). Its pathway is cofactor biosynthesis; riboflavin biosynthesis; riboflavin from 2-hydroxy-3-oxobutyl phosphate and 5-amino-6-(D-ribitylamino)uracil: step 1/2. Its function is as follows. Catalyzes the formation of 6,7-dimethyl-8-ribityllumazine by condensation of 5-amino-6-(D-ribitylamino)uracil with 3,4-dihydroxy-2-butanone 4-phosphate. This is the penultimate step in the biosynthesis of riboflavin. The chain is 6,7-dimethyl-8-ribityllumazine synthase from Shewanella piezotolerans (strain WP3 / JCM 13877).